We begin with the raw amino-acid sequence, 316 residues long: Methionyl-tRNA formyltransferase (316 aa).

Residue 110–113 (SLLP) coordinates (6S)-5,6,7,8-tetrahydrofolate.

Belongs to the Fmt family.

The enzyme catalyses L-methionyl-tRNA(fMet) + (6R)-10-formyltetrahydrofolate = N-formyl-L-methionyl-tRNA(fMet) + (6S)-5,6,7,8-tetrahydrofolate + H(+). Attaches a formyl group to the free amino group of methionyl-tRNA(fMet). The formyl group appears to play a dual role in the initiator identity of N-formylmethionyl-tRNA by promoting its recognition by IF2 and preventing the misappropriation of this tRNA by the elongation apparatus. This Halothermothrix orenii (strain H 168 / OCM 544 / DSM 9562) protein is Methionyl-tRNA formyltransferase.